The sequence spans 241 residues: Glucosamine-6-phosphate deaminase (241 aa).

The active-site Proton acceptor; for enolization step is the aspartate 67. The active-site For ring-opening step is asparagine 136. Catalysis depends on histidine 138, which acts as the Proton acceptor; for ring-opening step. Residue glutamate 143 is the For ring-opening step of the active site.

It belongs to the glucosamine/galactosamine-6-phosphate isomerase family. NagB subfamily.

It catalyses the reaction alpha-D-glucosamine 6-phosphate + H2O = beta-D-fructose 6-phosphate + NH4(+). It participates in amino-sugar metabolism; N-acetylneuraminate degradation; D-fructose 6-phosphate from N-acetylneuraminate: step 5/5. Catalyzes the reversible isomerization-deamination of glucosamine 6-phosphate (GlcN6P) to form fructose 6-phosphate (Fru6P) and ammonium ion. This chain is Glucosamine-6-phosphate deaminase, found in Halothermothrix orenii (strain H 168 / OCM 544 / DSM 9562).